Consider the following 338-residue polypeptide: MTQEREKAIELALSQIEKQFGKGAIMRLGADEALPDVAAIPTGSLSLDLALGVGGVPRGRIIEIYGPESSGKTTLALHIAAEAQKMGGIAAFVDAEHALDIGYARKLGVKTDDLLVSQPDTGEQALEIAEMLVRSGAVDVLVIDSVAALVPKAEIEGEMGDSHMGLQARLMSQALRKLTGIISKSNCCVIFINQIRMKIGVMFGNPETTTGGNALKFYASVRLDIRKIASLKQGQDVIGSRTKVKVVKNKVAPPFKEVEFDIYYGEGISREGDILDLAVEKGIVDKSGAWFSYGGDRIGQGRENSRLFLKERPELVNEIEGKVYDVAGIPRKGAKEAA.

Position 66–73 (66–73 (GPESSGKT)) interacts with ATP.

This sequence belongs to the RecA family.

It is found in the cytoplasm. Can catalyze the hydrolysis of ATP in the presence of single-stranded DNA, the ATP-dependent uptake of single-stranded DNA by duplex DNA, and the ATP-dependent hybridization of homologous single-stranded DNAs. It interacts with LexA causing its activation and leading to its autocatalytic cleavage. The protein is Protein RecA of Geobacter sulfurreducens (strain ATCC 51573 / DSM 12127 / PCA).